Consider the following 100-residue polypeptide: uncharacterized protein (100 aa).

The HTH arsR-type domain occupies 8 to 100 (MKQSDDQIRA…TYLPGFLETL (93 aa)). Positions 44 to 67 (CGEVGEKCNIVKTTASYHFKTLRE) form a DNA-binding region, H-T-H motif.

This is an uncharacterized protein from Bacillus subtilis (strain 168).